Consider the following 119-residue polypeptide: Putative transmembrane protein ORF119 (119 aa).

3 helical membrane-spanning segments follow: residues 9 to 29, 73 to 93, and 95 to 115; these read TLAI…PAMV, QYAG…SIFT, and PIAL…AFYY.

It is found in the host membrane. The sequence is that of Putative transmembrane protein ORF119 from Acidianus convivator (ATV).